The sequence spans 553 residues: Solute carrier family 22 member 12 (553 aa).

The chain crosses the membrane as a helical span at residues 10-30 (VGGLGRFQLFQTVALVTPILW). A glycan (N-linked (GlcNAc...) asparagine) is linked at asparagine 56. The next 11 helical transmembrane spans lie at 146-166 (PMAQSIFLAGILVGAAVCGHA), 182-202 (LVSVSGTAAAFMPTFPLYCLF), 204-224 (FLLASAVAGVMMNTASLLMEW), 232-252 (LVMTLNALGFSFGQVLTGSVA), 260-280 (MLQLAVSAPFFLFFVYSWWLP), 351-371 (IISMLCWFAFGFTFYGLALDL), 378-398 (IFLLQALIGIVDFPVKTGSLL), 412-432 (FLVLPGLCILSNILVPHGMGV), 435-455 (SALAVLGLGCLGGAFTCITIF), 466-486 (MTAVGLCQVAARGGAMLGPLV), and 495-515 (WMPLLVYGVVPVLSGLAALLL). The residue at position 534 (serine 534) is a Phosphoserine. Threonine 542 is subject to Phosphothreonine.

The protein belongs to the major facilitator (TC 2.A.1) superfamily. Organic cation transporter (TC 2.A.1.19) family. In terms of assembly, interacts with PDZK1. Post-translationally, N-glycosylated. As to expression, detected in kidney (at protein level). Detected in kidney cortex, in proximal tubules.

The protein localises to the apical cell membrane. The enzyme catalyses urate(out) + (S)-lactate(in) = urate(in) + (S)-lactate(out). The catalysed reaction is nicotinate(in) + urate(out) = nicotinate(out) + urate(in). It carries out the reaction urate(out) + n chloride(in) = urate(in) + n chloride(out). It catalyses the reaction orotate(out) + nicotinate(in) = orotate(in) + nicotinate(out). Its function is as follows. Electroneutral antiporter that translocates urate across the apical membrane of proximal tubular cells in exchange for monovalent organic or inorganic anions. Involved in renal reabsorption of urate and helps maintaining blood levels of uric acid. Mediates urate uptake by an exchange with organic anions such as (S)-lactate and nicotinate, and inorganic anion Cl(-). Other inorganic anions such as Br(-), I(-) and NO3(-) may also act as counteranions that exchange for urate. Also mediates orotate tubular uptake coupled with nicotinate efflux and to a lesser extent with lactate efflux, therefore displaying a potential role in orotate renal reabsorption. Orotate transport is Cl(-)-dependent. The protein is Solute carrier family 22 member 12 of Mus musculus (Mouse).